Here is a 314-residue protein sequence, read N- to C-terminus: Secreted frizzled-related protein 1 (314 aa).

The signal sequence occupies residues 1–31; that stretch reads MGIGRSEGGRRGAALGVLLALGAALLAVGSA. The FZ domain occupies 53–169; sequence TKPPQCVDIP…FPEGDVCIAM (117 aa). 5 disulfides stabilise this stretch: C58–C121, C68–C114, C105–C140, C129–C166, and C133–C157. A glycan (N-linked (GlcNAc...) asparagine) is linked at N173. 3 cysteine pairs are disulfide-bonded: C186/C256, C189/C258, and C203/C306. Residues 186-306 form the NTR domain; it reads CPPCDNELKS…FMKKMKNHEC (121 aa).

Belongs to the secreted frizzled-related protein (sFRP) family. Interacts with WNT1, WNT2 and FRZD6. Interacts with WNT4, WNT8 and MYOC. Widely expressed. Absent from lung, liver and peripheral blood leukocytes. Highest levels in heart and fetal kidney. Also expressed in testis, ovary, fetal brain and lung, leiomyomal cells, myometrial cells and vascular smooth muscle cells. Expressed in foreskin fibroblasts and in keratinocytes.

It localises to the secreted. Its function is as follows. Soluble frizzled-related proteins (sFRPS) function as modulators of Wnt signaling through direct interaction with Wnts. They have a role in regulating cell growth and differentiation in specific cell types. SFRP1 decreases intracellular beta-catenin levels. Has antiproliferative effects on vascular cells, in vitro and in vivo, and can induce, in vivo, an angiogenic response. In vascular cell cycle, delays the G1 phase and entry into the S phase. In kidney development, inhibits tubule formation and bud growth in metanephroi. Inhibits WNT1/WNT4-mediated TCF-dependent transcription. The sequence is that of Secreted frizzled-related protein 1 (SFRP1) from Homo sapiens (Human).